A 391-amino-acid polypeptide reads, in one-letter code: NADH-quinone oxidoreductase subunit D (391 aa).

Belongs to the complex I 49 kDa subunit family. As to quaternary structure, NDH-1 is composed of 14 different subunits. Subunits NuoB, C, D, E, F, and G constitute the peripheral sector of the complex.

Its subcellular location is the cell inner membrane. It catalyses the reaction a quinone + NADH + 5 H(+)(in) = a quinol + NAD(+) + 4 H(+)(out). Its function is as follows. NDH-1 shuttles electrons from NADH, via FMN and iron-sulfur (Fe-S) centers, to quinones in the respiratory chain. The immediate electron acceptor for the enzyme in this species is believed to be ubiquinone. Couples the redox reaction to proton translocation (for every two electrons transferred, four hydrogen ions are translocated across the cytoplasmic membrane), and thus conserves the redox energy in a proton gradient. In Rickettsia canadensis (strain McKiel), this protein is NADH-quinone oxidoreductase subunit D.